We begin with the raw amino-acid sequence, 354 residues long: DNA ligase C2 (354 aa).

Residue lysine 29 is the N6-AMP-lysine intermediate of the active site.

The protein belongs to the ATP-dependent DNA ligase family.

The enzyme catalyses ATP + (deoxyribonucleotide)n-3'-hydroxyl + 5'-phospho-(deoxyribonucleotide)m = (deoxyribonucleotide)n+m + AMP + diphosphate.. Its function is as follows. DNA ligase that seals nicks in double-stranded DNA during DNA replication, DNA recombination and DNA repair. Has weak intrinsic nick joining activities and accumulates DNA-adenylate. Acts as a backup for LigD in the Ku-LigD-dependent NHEJ pathway. This is DNA ligase C2 (ligC2) from Mycolicibacterium smegmatis (strain ATCC 700084 / mc(2)155) (Mycobacterium smegmatis).